The following is a 255-amino-acid chain: Glioma pathogenesis-related protein 1 (255 aa).

Residues 1-17 (MQVILAVIVWMASSVSS) form the signal peptide. The SCP domain maps to 39 to 164 (QVHNQLRSKV…PNGANFICDY (126 aa)). Residues 224–244 (SLFLIAKSVLLLLSVIITIWV) form a helical membrane-spanning segment.

This sequence belongs to the CRISP family.

It is found in the membrane. This chain is Glioma pathogenesis-related protein 1 (Glipr1), found in Mus musculus (Mouse).